We begin with the raw amino-acid sequence, 515 residues long: FADH(2)-dependent monooxygenase TftD (515 aa).

Residue Arg-100–Ala-104 participates in substrate binding. Residues Leu-151–Phe-153, Gln-157–Arg-160, and Thr-192 contribute to the FAD site. Gly-203–Cys-204 is a substrate binding site. Residue Thr-457 to Arg-460 participates in FAD binding.

This sequence belongs to the FADH(2)-utilizing monooxygenase family. As to quaternary structure, homotetramer. The chlorophenol-4-monooxygenase is composed of an oxygenase component TftD and a reductase component TftC.

The protein operates within xenobiotic degradation. Its function is as follows. Oxygenase component of a two-component system that degrades 2,4,5-trichlorophenol. Uses FADH(2) supplied by TftC to oxidize 2,4,5-trichlorophenol (2,4,5-TCP) to 2,5-dichloro-p-benzoquinone, which is chemically reduced to 2,5-dichloro-p-hydroquinone (2,5-DiCHQ). Then, TftD oxidizes the latter to 5-chloro-2-hydroxy-p-benzoquinone. In Burkholderia cepacia (Pseudomonas cepacia), this protein is FADH(2)-dependent monooxygenase TftD (tftD).